The sequence spans 317 residues: Small ribosomal subunit protein uS2 (317 aa).

Serine 2 is modified (N-acetylserine). 2 laminin-binding regions span residues isoleucine 161 to arginine 180 and arginine 205 to glycine 229. 5 [DE]-W-[ST] repeats span residues glutamate 230–serine 232, aspartate 245–serine 247, aspartate 288–serine 290, aspartate 297–serine 299, and glutamate 315–serine 317. The tract at residues glutamate 242–serine 317 is laminin-binding. Residues proline 278–serine 317 are disordered.

It belongs to the universal ribosomal protein uS2 family. In terms of assembly, monomer (37LRP) and homodimer (67LR). Component of the small ribosomal subunit. Mature ribosomes consist of a small (40S) and a large (60S) subunit. The 40S subunit contains about 33 different proteins and 1 molecule of RNA (18S). The 60S subunit contains about 49 different proteins and 3 molecules of RNA (28S, 5.8S and 5S). Interacts with rps21. Interacts with several laminins including at least lamb1. Interacts with mdk. Post-translationally, acylated. Acylation may be a prerequisite for conversion of the monomeric 37 kDa laminin receptor precursor (37LRP) to the mature dimeric 67 kDa laminin receptor (67LR), and may provide a mechanism for membrane association. In terms of processing, cleaved by stromelysin-3 (ST3) at the cell surface. Cleavage by stromelysin-3 may be a mechanism to alter cell-extracellular matrix interactions.

It localises to the cell membrane. The protein localises to the cytoplasm. The protein resides in the nucleus. In terms of biological role, required for the assembly and/or stability of the 40S ribosomal subunit. Required for the processing of the 20S rRNA-precursor to mature 18S rRNA in a late step of the maturation of 40S ribosomal subunits. Also functions as a cell surface receptor for laminin. Plays a role in cell adhesion to the basement membrane and in the consequent activation of signaling transduction pathways. May play a role in cell fate determination and tissue morphogenesis. The sequence is that of Small ribosomal subunit protein uS2 (rpsa) from Ictalurus punctatus (Channel catfish).